The following is a 264-amino-acid chain: Glutamate racemase (264 aa).

Substrate-binding positions include 10 to 11 (DS) and 42 to 43 (YG). Catalysis depends on Cys73, which acts as the Proton donor/acceptor. 74–75 (NT) is a binding site for substrate. Cys183 functions as the Proton donor/acceptor in the catalytic mechanism. Substrate is bound at residue 184 to 185 (TH).

This sequence belongs to the aspartate/glutamate racemases family.

The enzyme catalyses L-glutamate = D-glutamate. It participates in cell wall biogenesis; peptidoglycan biosynthesis. Functionally, provides the (R)-glutamate required for cell wall biosynthesis. In Streptococcus gordonii (strain Challis / ATCC 35105 / BCRC 15272 / CH1 / DL1 / V288), this protein is Glutamate racemase.